A 1201-amino-acid chain; its full sequence is Protein dduB (1201 aa).

The N-terminal stretch at 1 to 22 (MKFIKYLLILFLILKINYFVES) is a signal peptide. Residues 23 to 1180 (GVDCQKNTEY…QDPSDELSTS (1158 aa)) are Extracellular-facing. N68, N122, N150, N185, N283, N348, N360, N437, N448, N518, N535, N554, N585, N631, N759, N815, N830, N844, N946, N1042, N1058, N1098, and N1108 each carry an N-linked (GlcNAc...) asparagine glycan. A helical membrane pass occupies residues 1181-1201 (SFIQLNILSLLLISIFTIFIL).

The protein localises to the membrane. In Dictyostelium discoideum (Social amoeba), this protein is Protein dduB (dduB).